The following is a 568-amino-acid chain: Urease subunit beta (568 aa).

Residues 131-568 (GGIDTHIHFI…LSLAQLYNLF (438 aa)) enclose the Urease domain. Ni(2+)-binding residues include histidine 136, histidine 138, and lysine 219. Lysine 219 is modified (N6-carboxylysine). Histidine 221 provides a ligand contact to substrate. Ni(2+) contacts are provided by histidine 248 and histidine 274. Catalysis depends on histidine 321, which acts as the Proton donor. Aspartate 361 serves as a coordination point for Ni(2+).

It belongs to the metallo-dependent hydrolases superfamily. Urease alpha subunit family. As to quaternary structure, heterohexamer of 3 UreA (alpha) and 3 UreB (beta) subunits. Requires Ni cation as cofactor. Carboxylation allows a single lysine to coordinate two nickel ions.

It localises to the cytoplasm. It carries out the reaction urea + 2 H2O + H(+) = hydrogencarbonate + 2 NH4(+). The protein operates within nitrogen metabolism; urea degradation; CO(2) and NH(3) from urea (urease route): step 1/1. The protein is Urease subunit beta of Helicobacter heilmannii.